The sequence spans 556 residues: Putative solute carrier family 22 member 31 (556 aa).

At 1–23 (MEQEARVLRAAGGFGRARRLLAS) the chain is on the cytoplasmic side. A helical transmembrane segment spans residues 24–44 (ASWVPCIVLGLVLSSEELLTA). Residues 45–128 (QPAPHCRPDP…WNLVCGDGWK (84 aa)) are Extracellular-facing. The chain crosses the membrane as a helical span at residues 129–149 (VPLEQVSHLLGWLLGCVILGA). Over 150 to 157 (GCDRFGRR) the chain is Cytoplasmic. A helical membrane pass occupies residues 158 to 178 (AVFVASLVLTTGLGASEALAA). Residues 179 to 182 (SFPT) lie on the Extracellular side of the membrane. Residues 183-203 (LLVLRLLHGGTLAGALLALYL) form a helical membrane-spanning segment. The Cytoplasmic segment spans residues 204–218 (ARLELCDPPHRLAFS). Residues 219-239 (MGAGLFSVVGTLLLPGLAALV) traverse the membrane as a helical segment. Topologically, residues 240 to 246 (QDWRLLQ) are extracellular. The chain crosses the membrane as a helical span at residues 247-267 (GLGALMSGLLLLFWGFPALFP). At 268-339 (ESPCWLLATG…LRTRVTWRNG (72 aa)) the chain is on the cytoplasmic side. Residues 340–357 (LILGFSSLVGGGIRASFR) form a helical membrane-spanning segment. The Extracellular segment spans residues 358–366 (RSLAPQVPT). A helical transmembrane segment spans residues 367–387 (FYLPYFLEAGLEAAALVFLLL). The Cytoplasmic segment spans residues 388–395 (TADCCGRR). A helical membrane pass occupies residues 396 to 416 (PVLLLGTMVTGLASLLLLAGA). Residues 417 to 420 (QYLP) lie on the Extracellular side of the membrane. A helical transmembrane segment spans residues 421 to 441 (GWTVLFLSVLGLLASRAVSAL). Over 442-448 (SSLFAAE) the chain is Cytoplasmic. Residues 449–469 (VFPTVIRGAGLGLVLGAGFLG) form a helical membrane-spanning segment. Residues 470–483 (QAAGPLDTLHGRQG) are Extracellular-facing. The chain crosses the membrane as a helical span at residues 484–504 (FFLQQVVFASLAVLALLCVLL). At 505 to 556 (LPESRSRGLPQSLQDADRLRRSPLLRGRPRQDHLPLLPPSNSYWAGHTPEQH) the chain is on the cytoplasmic side. The tract at residues 524–556 (RRSPLLRGRPRQDHLPLLPPSNSYWAGHTPEQH) is disordered.

Belongs to the major facilitator (TC 2.A.1) superfamily. Organic cation transporter (TC 2.A.1.19) family.

Its subcellular location is the membrane. In terms of biological role, organic anion transporter that mediates the uptake of ions. The polypeptide is Putative solute carrier family 22 member 31 (Homo sapiens (Human)).